The following is a 141-amino-acid chain: Deoxyuridine 5'-triphosphate nucleotidohydrolase (141 aa).

The protein belongs to the dUTPase family. Mg(2+) is required as a cofactor.

The catalysed reaction is dUTP + H2O = dUMP + diphosphate + H(+). The protein operates within pyrimidine metabolism; dUMP biosynthesis; dUMP from dCTP (dUTP route): step 2/2. Its function is as follows. This enzyme is involved in nucleotide metabolism: it produces dUMP, the immediate precursor of thymidine nucleotides and it decreases the intracellular concentration of dUTP so that uracil cannot be incorporated into DNA. The polypeptide is Deoxyuridine 5'-triphosphate nucleotidohydrolase (Chlorella (PBCV-1)).